A 265-amino-acid chain; its full sequence is Putative Tubby-like protein 4 (265 aa).

The F-box domain maps to 1-44 (MPPELLRDVLMRIERSEDTWPSRKNVVSCVGVCKNWRQIFKEIV). The FBD domain maps to 228–250 (SYELKLALYFAKNSAILKKFVLR).

This sequence belongs to the TUB family.

The sequence is that of Putative Tubby-like protein 4 from Arabidopsis thaliana (Mouse-ear cress).